The following is a 295-amino-acid chain: ATP synthase gamma chain (295 aa).

This sequence belongs to the ATPase gamma chain family. F-type ATPases have 2 components, CF(1) - the catalytic core - and CF(0) - the membrane proton channel. CF(1) has five subunits: alpha(3), beta(3), gamma(1), delta(1), epsilon(1). CF(0) has three main subunits: a, b and c.

Its subcellular location is the cell inner membrane. Produces ATP from ADP in the presence of a proton gradient across the membrane. The gamma chain is believed to be important in regulating ATPase activity and the flow of protons through the CF(0) complex. The polypeptide is ATP synthase gamma chain (Campylobacter concisus (strain 13826)).